The primary structure comprises 40 residues: Photosystem II reaction center protein J (40 aa).

The chain crosses the membrane as a helical span at residues 8 to 28 (IPLWLIGTVTGTLVIGLIGIF).

This sequence belongs to the PsbJ family. As to quaternary structure, PSII is composed of 1 copy each of membrane proteins PsbA, PsbB, PsbC, PsbD, PsbE, PsbF, PsbH, PsbI, PsbJ, PsbK, PsbL, PsbM, PsbT, PsbX, PsbY, PsbZ, Psb30/Ycf12, at least 3 peripheral proteins of the oxygen-evolving complex and a large number of cofactors. It forms dimeric complexes.

Its subcellular location is the plastid. It is found in the chloroplast thylakoid membrane. Functionally, one of the components of the core complex of photosystem II (PSII). PSII is a light-driven water:plastoquinone oxidoreductase that uses light energy to abstract electrons from H(2)O, generating O(2) and a proton gradient subsequently used for ATP formation. It consists of a core antenna complex that captures photons, and an electron transfer chain that converts photonic excitation into a charge separation. This chain is Photosystem II reaction center protein J, found in Cycas taitungensis (Prince sago).